The chain runs to 1377 residues: DNA-directed RNA polymerase subunit beta'' (1377 aa).

Zn(2+) contacts are provided by cysteine 220, cysteine 291, cysteine 298, and cysteine 301.

The protein belongs to the RNA polymerase beta' chain family. RpoC2 subfamily. As to quaternary structure, in plastids the minimal PEP RNA polymerase catalytic core is composed of four subunits: alpha, beta, beta', and beta''. When a (nuclear-encoded) sigma factor is associated with the core the holoenzyme is formed, which can initiate transcription. It depends on Zn(2+) as a cofactor.

It is found in the plastid. It localises to the chloroplast. The enzyme catalyses RNA(n) + a ribonucleoside 5'-triphosphate = RNA(n+1) + diphosphate. In terms of biological role, DNA-dependent RNA polymerase catalyzes the transcription of DNA into RNA using the four ribonucleoside triphosphates as substrates. The protein is DNA-directed RNA polymerase subunit beta'' of Nandina domestica (Heavenly bamboo).